The chain runs to 335 residues: Probable peroxidase 26 (335 aa).

Positions 1 to 18 (MVMIHIFLTVMVVGGVSL) are cleaved as a signal peptide. 4 cysteine pairs are disulfide-bonded: cysteine 46/cysteine 122, cysteine 79/cysteine 84, cysteine 128/cysteine 331, and cysteine 205/cysteine 237. Residue arginine 73 is part of the active site. The Ca(2+) site is built by aspartate 78, valine 81, glycine 83, aspartate 85, and serine 87. Proline 168 contacts substrate. Histidine 198 contacts heme b. Serine 199 serves as a coordination point for Ca(2+). Asparagine 216 carries an N-linked (GlcNAc...) asparagine glycan. Ca(2+) is bound by residues aspartate 255 and serine 258. Residues asparagine 259 and asparagine 273 are each glycosylated (N-linked (GlcNAc...) asparagine).

This sequence belongs to the peroxidase family. Classical plant (class III) peroxidase subfamily. Heme b is required as a cofactor. It depends on Ca(2+) as a cofactor.

It is found in the secreted. The enzyme catalyses 2 a phenolic donor + H2O2 = 2 a phenolic radical donor + 2 H2O. Removal of H(2)O(2), oxidation of toxic reductants, biosynthesis and degradation of lignin, suberization, auxin catabolism, response to environmental stresses such as wounding, pathogen attack and oxidative stress. The enzyme activity has to be proved. In Arabidopsis thaliana (Mouse-ear cress), this protein is Probable peroxidase 26 (PER26).